The primary structure comprises 319 residues: Putative antiporter CaxA (319 aa).

10 helical membrane passes run 3 to 23 (VATI…DRFV), 38 to 58 (MIIG…MVSA), 81 to 101 (ILLV…SMTI), 105 to 125 (FPLL…QSLT), 127 to 147 (AEGA…VYWG), 175 to 195 (VWLV…VHGA), 208 to 228 (LIGL…ASLI), 250 to 270 (ILAV…AAAA), 275 to 292 (YVMM…LRLG), and 297 to 317 (INRV…YLLF).

This sequence belongs to the Ca(2+):cation antiporter (CaCA) (TC 2.A.19) family.

It is found in the cell membrane. Its function is as follows. Confers modest Ca(2+) and Na(+) resistance. This chain is Putative antiporter CaxA (caxA), found in Alkalimonas amylolytica.